The chain runs to 59 residues: Large ribosomal subunit protein uL30 (59 aa).

The protein belongs to the universal ribosomal protein uL30 family. Part of the 50S ribosomal subunit.

This Hydrogenobaculum sp. (strain Y04AAS1) protein is Large ribosomal subunit protein uL30.